The chain runs to 294 residues: MKQLTLAKTVKGVGIGLHKGEPIEITLEPLEANSGIVFFRSDLNASYKASPENVINTQMATVLGDDRGFISTIEHLMSAINAYGIDNVRIVLNANEAPVMDGSSISFCMMLDEAGVKELDAPKKIMVIKKPVEVRDGNKFVRLTPTKEPRINYTIKFDNAVIGEQSYNFEFSKKNYIENIARARTFGFLKDVQALRSMNLALGGSLENTIVVDENRILNPEGLRFKDEFVRHKILDAIGDLTLLGYRVFGDYISYAGSHHLNHLLTKEVLKDKDAYEIVSLEKTTQKAYEKVFA.

His75, His232, and Asp236 together coordinate Zn(2+). His259 serves as the catalytic Proton donor.

Belongs to the LpxC family. The cofactor is Zn(2+).

It carries out the reaction a UDP-3-O-[(3R)-3-hydroxyacyl]-N-acetyl-alpha-D-glucosamine + H2O = a UDP-3-O-[(3R)-3-hydroxyacyl]-alpha-D-glucosamine + acetate. It participates in glycolipid biosynthesis; lipid IV(A) biosynthesis; lipid IV(A) from (3R)-3-hydroxytetradecanoyl-[acyl-carrier-protein] and UDP-N-acetyl-alpha-D-glucosamine: step 2/6. Functionally, catalyzes the hydrolysis of UDP-3-O-myristoyl-N-acetylglucosamine to form UDP-3-O-myristoylglucosamine and acetate, the committed step in lipid A biosynthesis. The protein is UDP-3-O-acyl-N-acetylglucosamine deacetylase of Campylobacter jejuni subsp. jejuni serotype O:6 (strain 81116 / NCTC 11828).